A 601-amino-acid polypeptide reads, in one-letter code: Nuclear receptor subfamily 2 group C member 1 (601 aa).

The interval 1–179 (MATIEEIAHQ…RLQRCIAFGM (179 aa)) is required for interaction with KAT2B. The segment at residues 111–186 (FDLCVVCGDK…FGMKQDSVQC (76 aa)) is a DNA-binding region (nuclear receptor). NR C4-type zinc fingers lie at residues 114–134 (CVVCGDKASGRHYGAVTCEGC) and 150–169 (CRGSKDCIINKHHRNRCQYC). A phosphoserine mark is found at S198 and S216. Position 221 is a phosphothreonine (T221). Residue T223 is modified to Phosphothreonine; by MAPK1. Residue K251 forms a Glycyl lysine isopeptide (Lys-Gly) (interchain with G-Cter in SUMO); alternate linkage. A Glycyl lysine isopeptide (Lys-Gly) (interchain with G-Cter in SUMO2); alternate cross-link involves residue K251. The NR LBD domain occupies 349 to 591 (GSVHLITGDS…SVIPHILKME (243 aa)). At S582 the chain carries Phosphoserine; by PKC. The required for interaction with NRIP1 stretch occupies residues 585–601 (PHILKMEPGQYSKTSSL). A Glycyl lysine isopeptide (Lys-Gly) (interchain with G-Cter in SUMO2) cross-link involves residue K589.

The protein belongs to the nuclear hormone receptor family. NR2 subfamily. As to quaternary structure, homodimer. Heterodimer; with NR2C2 which is required for chromatin remodeling and for binding to promoter regions such as globin DR1 repeats. Interacts with ESR1; the interaction prevents homodimerization of ESR1 and suppresses its transcriptional activity and cell growth. Interacts with NRIP1 (via its LXXLL motifs); the interaction provides corepressor activity. Interacts with HDAC3 (via the DNA-binding domain); the interaction recruits phosphorylated NR2C1 to PML bodies for sumoylation. Interacts with HDAC4 (via the DNA-binding domain). Interacts with PIAS1; the interaction is required for sumoylation of NR2C1. Interacts with UBE2I; the interaction is required for sumoylation of NR2C1. Interacts with KAT2B; the interaction acts as a corepressor of gene expression. Post-translationally, sumoylation requires both PIAS1 and UBE2I. Sumoylation appears to dissociate NR2C1 from the PML nuclear bodies. Enhances the interaction with NRIP1 but inhibits interaction with KAT2B. In proliferating cells, stimulation by all-trans retinoic acid, activation of MAPK1-mediated phosphorylation and recruitment to PML bodies with subsequent sumoylation, suppresses OCT4 expression. Phosphorylated on several serine and threonine residues. Phosphorylation on Thr-223, stimulated by all-trans retinoic acid (atRA) mediates PML location and sumoylation in proliferating cells which then modulates its association with effector molecules, KAT2B and NRIP1. Phosphorylation on Ser-582 by PKC is important for protein stability and function as activator of RARB.

The protein localises to the nucleus. Its subcellular location is the PML body. Orphan nuclear receptor. Binds the IR7 element in the promoter of its own gene in an autoregulatory negative feedback mechanism. Primarily repressor of a broad range of genes including ESR1 and RARB. Together with NR2C2, forms the core of the DRED (direct repeat erythroid-definitive) complex that represses embryonic and fetal globin transcription. Binds to hormone response elements (HREs) consisting of two 5'-AGGTCA-3' half site direct repeat consensus sequences. Also activator of OCT4 gene expression. Plays a fundamental role in early embryogenesis and regulates embryonic stem cell proliferation and differentiation. Mediator of retinoic acid-regulated preadipocyte proliferation. The sequence is that of Nuclear receptor subfamily 2 group C member 1 (NR2C1) from Pongo abelii (Sumatran orangutan).